We begin with the raw amino-acid sequence, 220 residues long: Small ribosomal subunit protein mS23 (220 aa).

This sequence belongs to the mitochondrion-specific ribosomal protein mS23 family. In terms of assembly, component of the mitochondrial small ribosomal subunit (mt-SSU). Mature yeast 74S mitochondrial ribosomes consist of a small (37S) and a large (54S) subunit. The 37S small subunit contains a 15S ribosomal RNA (15S mt-rRNA) and at least 32 different proteins. The 54S large subunit contains a 21S rRNA (21S mt-rRNA) and at least 45 different proteins.

Its subcellular location is the mitochondrion. In terms of biological role, component of the mitochondrial ribosome (mitoribosome), a dedicated translation machinery responsible for the synthesis of mitochondrial genome-encoded proteins, including at least some of the essential transmembrane subunits of the mitochondrial respiratory chain. The mitoribosomes are attached to the mitochondrial inner membrane and translation products are cotranslationally integrated into the membrane. The polypeptide is Small ribosomal subunit protein mS23 (rsm25) (Schizosaccharomyces pombe (strain 972 / ATCC 24843) (Fission yeast)).